Consider the following 171-residue polypeptide: uncharacterized protein (171 aa).

It belongs to the mimivirus R24/R907 family.

This is an uncharacterized protein from Acanthamoeba polyphaga (Amoeba).